Here is a 434-residue protein sequence, read N- to C-terminus: Glutamyl-tRNA reductase (434 aa).

Residues 52–55 (TCNR), S115, 120–122 (ETQ), and Q126 contribute to the substrate site. The active-site Nucleophile is the C53. An NADP(+)-binding site is contributed by 195-200 (GAGEMI).

The protein belongs to the glutamyl-tRNA reductase family. Homodimer.

The catalysed reaction is (S)-4-amino-5-oxopentanoate + tRNA(Glu) + NADP(+) = L-glutamyl-tRNA(Glu) + NADPH + H(+). It functions in the pathway porphyrin-containing compound metabolism; protoporphyrin-IX biosynthesis; 5-aminolevulinate from L-glutamyl-tRNA(Glu): step 1/2. Its function is as follows. Catalyzes the NADPH-dependent reduction of glutamyl-tRNA(Glu) to glutamate 1-semialdehyde (GSA). This Cupriavidus metallidurans (strain ATCC 43123 / DSM 2839 / NBRC 102507 / CH34) (Ralstonia metallidurans) protein is Glutamyl-tRNA reductase.